We begin with the raw amino-acid sequence, 109 residues long: Thiosulfate sulfurtransferase GlpE (109 aa).

One can recognise a Rhodanese domain in the interval 16–104; sequence RAEGAVVVDI…WRSTYPGETA (89 aa). The active-site Cysteine persulfide intermediate is the Cys64.

Belongs to the GlpE family.

The protein localises to the cytoplasm. The catalysed reaction is thiosulfate + hydrogen cyanide = thiocyanate + sulfite + 2 H(+). The enzyme catalyses thiosulfate + [thioredoxin]-dithiol = [thioredoxin]-disulfide + hydrogen sulfide + sulfite + 2 H(+). Transferase that catalyzes the transfer of sulfur from thiosulfate to thiophilic acceptors such as cyanide or dithiols. May function in a CysM-independent thiosulfate assimilation pathway by catalyzing the conversion of thiosulfate to sulfite, which can then be used for L-cysteine biosynthesis. This is Thiosulfate sulfurtransferase GlpE from Pseudomonas entomophila (strain L48).